We begin with the raw amino-acid sequence, 336 residues long: Phytochrome A-associated F-box protein (336 aa).

In terms of domain architecture, F-box spans 3 to 55; it reads ESVFSCIPEDVVFNIFFKLQDDPRNWARLACVCTKFSSIVRNVCCKTQCYSAI. The short motif at 197 to 201 is the Nuclear localization signal element; the sequence is RKRRK.

As to quaternary structure, probable component of an E3 ubiquitin ligase SCF complex. Interacts with SKP1A/ASK1 and SKP1B/ASK2.

The protein resides in the nucleus. Its pathway is protein modification; protein ubiquitination. Functionally, component of SCF(ASK-cullin-F-box) E3 ubiquitin ligase complexes, which may mediate the ubiquitination and subsequent proteasomal degradation of target proteins. Negative regulator of the phyA signaling pathway that shifts the responsiveness of the phyA signaling system associated with hypocotyl elongation from red to far-red wavelength. This is Phytochrome A-associated F-box protein (EID1) from Arabidopsis thaliana (Mouse-ear cress).